Reading from the N-terminus, the 233-residue chain is 27 kDa hemolymph glycoprotein (233 aa).

Positions 1–17 (MIWKTLIVAFMATAVLA) are cleaved as a signal peptide. Asparagine 125 and asparagine 156 each carry an N-linked (GlcNAc...) asparagine glycan.

This sequence belongs to the UPF0408 family. In terms of processing, N-glycosylated. In terms of tissue distribution, hemolymph.

Its subcellular location is the secreted. The chain is 27 kDa hemolymph glycoprotein from Manduca sexta (Tobacco hawkmoth).